The following is a 335-amino-acid chain: Beta-ketoacyl-[acyl-carrier-protein] synthase III 3 (335 aa).

Residues C114 and H256 contribute to the active site. Residues Q257–R261 are ACP-binding. The active site involves N286.

Belongs to the thiolase-like superfamily. FabH family. In terms of assembly, homodimer.

The protein localises to the cytoplasm. It carries out the reaction malonyl-[ACP] + acetyl-CoA + H(+) = 3-oxobutanoyl-[ACP] + CO2 + CoA. Its pathway is lipid metabolism; fatty acid biosynthesis. In terms of biological role, catalyzes the condensation reaction of fatty acid synthesis by the addition to an acyl acceptor of two carbons from malonyl-ACP. Catalyzes the first condensation reaction which initiates fatty acid synthesis and may therefore play a role in governing the total rate of fatty acid production. Possesses both acetoacetyl-ACP synthase and acetyl transacylase activities. Its substrate specificity determines the biosynthesis of branched-chain and/or straight-chain of fatty acids. In Streptomyces coelicolor (strain ATCC BAA-471 / A3(2) / M145), this protein is Beta-ketoacyl-[acyl-carrier-protein] synthase III 3.